A 536-amino-acid chain; its full sequence is MVELTEFQKRRQENIKRNNDLLKKLHLGGAASRIKREAGVDDTHRTVVKKKKSPSVSRGRSASPKVAPVATRRSMRLRGEKVDNVGIPNVSDTQLMKMSLDGTSGSSVNDKELVDEIKDTPVIGDVKLSDLIKDEKEENLIEKFKSFANKNFSSGDFFEEIRKRQMENKAPELQKLQDDFDLQLYDVFQPNEIKLVYERITATYFHPSLDKKLIVAGDTSGNIGLWNVRDEPLSENGEDQMVEPDITKVKFFTKNVGKIDCFTSDTSKLLTASYDGSLRSIDLNSLQSNDILTLRNEYDDPLGISDFQFSYENPNVLLMTTLSGEFVNIDLREKIGEQISSNLRRLSDKKIGSFSINPNRPYEIATGSLDRTLKIWDIRKLVKKPEWSQYEDYDSCEIVSVYDSRLSVSAVSYSPTDNTLVCNGYDDTIRLFDVGSDNLPDDLQPKLTLKHNCQSGRWTSILKARFKQDQDVFAIANMKRAIDIYDSQGQQLAHLPTATVPAVISWHPLRNWIAGGNSSGKIFLFTDETVKKEEEE.

Basic and acidic residues predominate over residues 36-45 (REAGVDDTHR). Positions 36–72 (REAGVDDTHRTVVKKKKSPSVSRGRSASPKVAPVATR) are disordered. WD repeat units lie at residues 195–236 (LVYE…LSEN), 251–291 (FFTK…SNDI), 346–386 (LSDK…KKPE), 403–442 (DSRL…LPDD), 456–495 (GRWT…LAHL), and 496–535 (PTAT…KEEE).

This sequence belongs to the WD repeat DDB2/WDR76 family.

DNA-binding protein that binds to both single- and double-stranded DNA. Binds preferentially to UV-damaged DNA. May be involved in DNA-metabolic processes. In Vanderwaltozyma polyspora (strain ATCC 22028 / DSM 70294 / BCRC 21397 / CBS 2163 / NBRC 10782 / NRRL Y-8283 / UCD 57-17) (Kluyveromyces polysporus), this protein is DNA damage-binding protein CMR1.